The chain runs to 251 residues: MCTSKLEEITGEWPPPALQAASTTSSSEPCRRLSPPSSKRPAGRTKFHETRHPVFRGVRRRGRAGRWVCEVRVPGRRGCRLWLGTFDAADAAARAHDAAMLALRGRAAACLNFADSAWLLAVPPPATLRCAADVQRAVARALEDFEQRESSSSVFPLAIDVVAEDAMSATSEPSAASDDDAVTSSSSTTDADEEASPFELDVVSDMGWSLYYASLAEGLLMEPPASGASSDDDDDAIVDSSDIADVSLWSY.

The segment at 1–50 (MCTSKLEEITGEWPPPALQAASTTSSSEPCRRLSPPSSKRPAGRTKFHET) is disordered. A DNA-binding region (AP2/ERF) is located at residues 54–114 (VFRGVRRRGR…GRAAACLNFA (61 aa)). The tract at residues 169-198 (ATSEPSAASDDDAVTSSSSTTDADEEASPF) is disordered.

This sequence belongs to the AP2/ERF transcription factor family. ERF subfamily.

It localises to the nucleus. In terms of biological role, transcriptional activator that binds specifically to the DNA sequence 5'-[AG]CCGAC-3'. Binding to the C-repeat/DRE element mediates high salinity- and dehydration-inducible transcription. The protein is Dehydration-responsive element-binding protein 1I (DREB1I) of Oryza sativa subsp. japonica (Rice).